The primary structure comprises 487 residues: 4-alpha-glucanotransferase (487 aa).

Belongs to the disproportionating enzyme family.

Its subcellular location is the cytoplasm. The enzyme catalyses Transfers a segment of a (1-&gt;4)-alpha-D-glucan to a new position in an acceptor, which may be glucose or a (1-&gt;4)-alpha-D-glucan.. Its function is as follows. Catalyzes a disproportionation reaction in which single or multiple glucose units from oligosaccharides are transferred to the 4-hydroxyl group of acceptor sugars. Glucose, maltose and maltotriose can act as acceptor, whereas of the three only maltotriose can act as donor. In Clostridium butyricum, this protein is 4-alpha-glucanotransferase (malQ).